We begin with the raw amino-acid sequence, 129 residues long: Glycine cleavage system H protein 2 (129 aa).

The Lipoyl-binding domain occupies 24 to 105 (SVTVGISDHA…PYVSWFFKLK (82 aa)). Position 65 is an N6-lipoyllysine (Lys65).

This sequence belongs to the GcvH family. The glycine cleavage system is composed of four proteins: P, T, L and H. It depends on (R)-lipoate as a cofactor.

Functionally, the glycine cleavage system catalyzes the degradation of glycine. The H protein shuttles the methylamine group of glycine from the P protein to the T protein. This chain is Glycine cleavage system H protein 2, found in Pseudomonas aeruginosa (strain ATCC 15692 / DSM 22644 / CIP 104116 / JCM 14847 / LMG 12228 / 1C / PRS 101 / PAO1).